We begin with the raw amino-acid sequence, 646 residues long: MAAESGSDFQQRRRRRRDPEEPEKTELSERELAVAVAVSQENDEENEERWVGPLPVEATLAKKRKVLEFERVYLDNLPSASMYERSYMHRDVITHVVCTKTDFIITASHDGHVKFWKKIEEGIEFVKHFRSHLGVIECIAVSSEGALFCSVGDDKAMKVFDVVNFDMINMLKLGYFPGQCEWIYCPGDAISSVAASEKSTGKIFIYDGRGDNQPLHIFDKLHTSPLTQIRLNPVYKAVVSSDKSGMIEYWTGPPHEYKFPKNVNWEYKTDTDLYEFAKCKAYPTSICFSPDGKKIATIGSDRKVRISKFLTGKLMRVFDESLSMFTELQQMRQQLPDMEFGRRMAVERELEKVDAVRLINIVFDETGHFVLYGTMLGIKVINVETNRCVRILGKQENIRVMQLALFQGIAKKHRAATTIEMKASENPVLQNIQADPTVVCTPFKKNRFYMFTKREPEDTKSADSDRDVFNEKPSKEEVMAATQAEGPKRVSDSAIIHTSMGDIHTKLFPVECPKTVENFCVHSRNGYYNGHTFHRIIKGFMIQTGDPTGTGMGGESIWGGEFEDEFHSTLRHDRPYTLSMANAGSNTNGSQFFITVVPTPWLDNKHTVFGRVTKGMEVVQRISNVKVNPKTDKPYEDVSIINITVK.

Residues 1-30 form a disordered region; that stretch reads MAAESGSDFQQRRRRRRDPEEPEKTELSER. Ala2 is subject to N-acetylalanine. A compositionally biased stretch (basic and acidic residues) spans 17–30; sequence RDPEEPEKTELSER. WD repeat units lie at residues 88–126, 131–170, 221–260, and 278–319; these read MHRDVITHVVCTKTDFIITASHDGHVKFWKKIEEGIEFV, SHLGVIECIAVSSEGALFCSVGDDKAMKVFDVVNFDMINM, LHTSPLTQIRLNPVYKAVVSSDKSGMIEYWTGPPHEYKFP, and KCKA…RVFD. Basic and acidic residues predominate over residues 455–478; the sequence is EPEDTKSADSDRDVFNEKPSKEEV. The segment at 455–490 is disordered; it reads EPEDTKSADSDRDVFNEKPSKEEVMAATQAEGPKRV. Residues 490 to 645 form the PPIase cyclophilin-type domain; the sequence is VSDSAIIHTS…EDVSIINITV (156 aa).

Belongs to the cyclophilin-type PPIase family. PPIL1 subfamily. Identified in the spliceosome C complex.

The protein localises to the nucleus. It carries out the reaction [protein]-peptidylproline (omega=180) = [protein]-peptidylproline (omega=0). Its activity is regulated as follows. Inhibited by cyclosporin A (CsA). In terms of biological role, PPIase that catalyzes the cis-trans isomerization of proline imidic peptide bonds in oligopeptides and may therefore assist protein folding. May be involved in pre-mRNA splicing. This chain is Peptidylprolyl isomerase domain and WD repeat-containing protein 1, found in Pongo abelii (Sumatran orangutan).